The following is a 1342-amino-acid chain: DNA-directed RNA polymerase subunit beta (1342 aa).

This sequence belongs to the RNA polymerase beta chain family. As to quaternary structure, the RNAP catalytic core consists of 2 alpha, 1 beta, 1 beta' and 1 omega subunit. When a sigma factor is associated with the core the holoenzyme is formed, which can initiate transcription.

The catalysed reaction is RNA(n) + a ribonucleoside 5'-triphosphate = RNA(n+1) + diphosphate. Its function is as follows. DNA-dependent RNA polymerase catalyzes the transcription of DNA into RNA using the four ribonucleoside triphosphates as substrates. The protein is DNA-directed RNA polymerase subunit beta of Erwinia tasmaniensis (strain DSM 17950 / CFBP 7177 / CIP 109463 / NCPPB 4357 / Et1/99).